A 336-amino-acid chain; its full sequence is Biotin synthase (336 aa).

The Radical SAM core domain maps to 55 to 288; that stretch reads GEAASLHACS…RTIIKFAAGR (234 aa). [4Fe-4S] cluster-binding residues include Cys-73, Cys-77, and Cys-80. Positions 152, 213, and 283 each coordinate [2Fe-2S] cluster.

Belongs to the radical SAM superfamily. Biotin synthase family. As to quaternary structure, homodimer. It depends on [4Fe-4S] cluster as a cofactor. [2Fe-2S] cluster is required as a cofactor.

It carries out the reaction (4R,5S)-dethiobiotin + (sulfur carrier)-SH + 2 reduced [2Fe-2S]-[ferredoxin] + 2 S-adenosyl-L-methionine = (sulfur carrier)-H + biotin + 2 5'-deoxyadenosine + 2 L-methionine + 2 oxidized [2Fe-2S]-[ferredoxin]. It participates in cofactor biosynthesis; biotin biosynthesis; biotin from 7,8-diaminononanoate: step 2/2. Functionally, catalyzes the conversion of dethiobiotin (DTB) to biotin by the insertion of a sulfur atom into dethiobiotin via a radical-based mechanism. The sequence is that of Biotin synthase from Chlorobium limicola (strain DSM 245 / NBRC 103803 / 6330).